Consider the following 450-residue polypeptide: Vacuolar cation/proton exchanger 1c (450 aa).

At 1 to 73 the chain is on the cytoplasmic side; the sequence is MAPPESSHHH…LLGGPAAQLQ (73 aa). The tract at residues 28 to 52 is disordered; sequence AAEEEEKKEAAAWTPSSSSSMTGRK. The helical transmembrane segment at 74–94 threads the bilayer; the sequence is EVLLGTKLYPLFSAVPLAVAA. Residues 95–101 lie on the Extracellular side of the membrane; sequence ESLRLGR. Residues 102 to 122 form a helical membrane-spanning segment; the sequence is VWVFAFSLIGLAPLAERVSFL. Over 123–134 the chain is Cytoplasmic; it reads SEHIANTVGPTA. Residues 135-155 form a helical membrane-spanning segment; the sequence is GGIMNATCGNVPELIIALFAL. The segment at 143–178 is cation selection; sequence GNVPELIIALFALHKNKMEILKWSLLGSILSNLLLV. The Extracellular portion of the chain corresponds to 156–170; it reads HKNKMEILKWSLLGS. The helical transmembrane segment at 171–191 threads the bilayer; that stretch reads ILSNLLLVLGSSLLFGGIVNI. Over 192 to 201 the chain is Cytoplasmic; that stretch reads GKERPLDKRQ. Residues 202 to 222 traverse the membrane as a helical segment; that stretch reads ADVSIGLLLLGVLCHIATLVS. At 223–239 the chain is on the extracellular side; the sequence is KYTSSTGDSINSSSVMQ. Residues 240 to 260 traverse the membrane as a helical segment; it reads LSRSCAIVMLIAYFGSLMFQL. Residues 261 to 287 lie on the Cytoplasmic side of the membrane; that stretch reads KTHRQIFELEEDSSDSSSSEDDATDKS. A helical membrane pass occupies residues 288-308; it reads VIGFASAMVWLIGMAVVTAML. At 309–331 the chain is on the extracellular side; it reads SSYVVTTIEEASESMGIPVRFIS. A helical membrane pass occupies residues 332 to 352; that stretch reads IILLPIVGNAAEHAGAIIFAF. A cation selection region spans residues 339 to 374; it reads GNAAEHAGAIIFAFKNKIDISLGITLGSATQISMLV. The Cytoplasmic portion of the chain corresponds to 353-360; it reads KNKIDISL. Residues 361–381 form a helical membrane-spanning segment; sequence GITLGSATQISMLVVPVILIV. Over 382–385 the chain is Extracellular; the sequence is SWVN. The helical transmembrane segment at 386–406 threads the bilayer; sequence AIPMDLDFNLLETGSLAMAVI. Over 407 to 424 the chain is Cytoplasmic; the sequence is TTAFTLQDDKWHYLKGLN. The chain crosses the membrane as a helical span at residues 425–445; it reads LVFSYIVIAVCFFVMKALPTL. Over 446–450 the chain is Extracellular; sequence KKEDD.

This sequence belongs to the Ca(2+):cation antiporter (CaCA) (TC 2.A.19) family. Cation/proton exchanger (CAX) subfamily. In terms of tissue distribution, expressed in leaf blades.

The protein resides in the vacuole membrane. In terms of biological role, vacuolar cation/proton exchanger (CAX). Translocates Ca(2+) and other metal ions into vacuoles using the proton gradient formed by H(+)-ATPase and H(+)-pyrophosphatase. This is Vacuolar cation/proton exchanger 1c (CAX1c) from Oryza sativa subsp. japonica (Rice).